The sequence spans 551 residues: High-affinity glucose transporter (551 aa).

Residues 1 to 27 lie on the Cytoplasmic side of the membrane; sequence MSLKNWLLLRDIQYEGTFYKKFPHVYN. Residues 28–48 form a helical membrane-spanning segment; sequence IYVIGFIACISGLMFGFDIAS. Residues 49–70 are Extracellular-facing; that stretch reads MSSMIGTDVYKDYFSNPDSLTY. Residues 71 to 91 form a helical membrane-spanning segment; sequence GGITASMAGGSFLGSLISPNF. The Cytoplasmic segment spans residues 92–98; sequence SDAFGRK. A helical transmembrane segment spans residues 99-119; it reads VSLHICAALWIIGAILQCAAQ. The Extracellular portion of the chain corresponds to 120-123; that stretch reads DQAM. A helical transmembrane segment spans residues 124–144; sequence LIVGRVISGMGIGFGSSAAPV. Residues 145 to 155 are Cytoplasmic-facing; that stretch reads YCSEISPPKIR. The chain crosses the membrane as a helical span at residues 156–176; sequence GTISGLFQFSVTVGIMVLFYI. Residues 177-190 are Extracellular-facing; it reads GYGCHFIDGAAAFR. A helical transmembrane segment spans residues 191-211; that stretch reads ITWGLQMVPGLILMVGVFFIP. Residues 212 to 289 are Cytoplasmic-facing; sequence ESPRWLANHD…VGVSAQMWQQ (78 aa). A helical transmembrane segment spans residues 290-310; sequence LCGMNVMMYYIVYIFNMAGYT. Residues 311 to 315 lie on the Extracellular side of the membrane; that stretch reads GNTNL. The helical transmembrane segment at 316 to 336 threads the bilayer; that stretch reads VASSIQYVLNVVMTIPALFLI. Topologically, residues 337 to 343 are cytoplasmic; it reads DKFGRRP. Residues 344–364 form a helical membrane-spanning segment; sequence VLIIGGIFMFTWLFSVAGILA. Over 365-395 the chain is Extracellular; it reads TYSVPAPGGVNGDDTVTIQIPSENTSAANGV. Residue N388 is glycosylated (N-linked (GlcNAc...) asparagine). The helical transmembrane segment at 396 to 416 threads the bilayer; it reads IASSYLFVCFFAPTWGIGIWI. The Cytoplasmic portion of the chain corresponds to 417 to 432; that stretch reads YCSEIFNNMERAKGSA. A helical transmembrane segment spans residues 433 to 453; the sequence is LSAATNWAFNFALAMFVPSAF. The Extracellular segment spans residues 454-459; it reads KNISWK. Residues 460-480 traverse the membrane as a helical segment; sequence TYIIFGVFSVALTIQTFFMFP. The Cytoplasmic portion of the chain corresponds to 481 to 551; it reads ETKGKTLEEI…DRSDSASNSN (71 aa).

The protein belongs to the major facilitator superfamily. Sugar transporter (TC 2.A.1.1) family.

Its subcellular location is the membrane. High-affinity glucose transporter. The polypeptide is High-affinity glucose transporter (HGT1) (Kluyveromyces lactis (strain ATCC 8585 / CBS 2359 / DSM 70799 / NBRC 1267 / NRRL Y-1140 / WM37) (Yeast)).